Consider the following 217-residue polypeptide: Somatotropin (217 aa).

Residues 1-26 (MAAGSRTSLLLAFALLCLPWLQEGSA) form the signal peptide. Residue His44 coordinates Zn(2+). Cys79 and Cys191 are joined by a disulfide. Position 132 is a phosphoserine (Ser132). Glu200 provides a ligand contact to Zn(2+). An intrachain disulfide couples Cys208 to Cys215.

It belongs to the somatotropin/prolactin family.

Its subcellular location is the secreted. Functionally, plays an important role in growth control. Its major role in stimulating body growth is to stimulate the liver and other tissues to secrete IGF1. It stimulates both the differentiation and proliferation of myoblasts. It also stimulates amino acid uptake and protein synthesis in muscle and other tissues. The polypeptide is Somatotropin (GH1) (Macaca mulatta (Rhesus macaque)).